Here is a 560-residue protein sequence, read N- to C-terminus: uncharacterized protein (560 aa).

The segment at residues 18–44 (CLRCRRRKVKCDRQYPCSRCKESEESC) is a DNA-binding region (zn(2)-C6 fungal-type). A disordered region spans residues 60-80 (LSRPITRETDSSAHQETRTRL). The span at 64–80 (ITRETDSSAHQETRTRL) shows a compositional bias: basic and acidic residues. Residues 182-202 (FATSIILIVTAIAVALSLESF) form a helical membrane-spanning segment.

Its subcellular location is the nucleus membrane. This is an uncharacterized protein from Schizosaccharomyces pombe (strain 972 / ATCC 24843) (Fission yeast).